Consider the following 283-residue polypeptide: 1-acyl-sn-glycerol-3-phosphate acyltransferase alpha (283 aa).

Positions 1 to 26 are cleaved as a signal peptide; sequence MDLWPGAWMLLLLLFLLLLFLLPTLW. The Lumenal portion of the chain corresponds to 27-37; that stretch reads FCSPSAKYFFK. The chain crosses the membrane as a helical span at residues 38–58; the sequence is MAFYNGWILFLAVLAIPVCAV. Topologically, residues 59 to 127 are cytoplasmic; the sequence is RGRNVENMKI…PGRCVPIAKR (69 aa). An HXXXXD motif motif is present at residues 104–109; sequence HQSSLD. Residues 128-148 traverse the membrane as a helical segment; it reads ELLWAGSAGLACWLAGVIFID. At 149-283 the chain is on the lumenal side; that stretch reads RKRTGDAISV…DYLKKPGGGG (135 aa). The EGTR motif signature appears at 178–181; sequence EGTR.

It belongs to the 1-acyl-sn-glycerol-3-phosphate acyltransferase family. As to expression, widely expressed. Expressed in adipose tissue and at high levels in testis and pancreas. Expressed at lower levels in tissues such as heart, brain, placenta, kidney, lung, spleen, thymus, prostate, ovary, intestine, colon, leukocyte and liver.

The protein resides in the endoplasmic reticulum membrane. The enzyme catalyses a 1-acyl-sn-glycero-3-phosphate + an acyl-CoA = a 1,2-diacyl-sn-glycero-3-phosphate + CoA. The catalysed reaction is 1-(9Z-octadecenoyl)-sn-glycero-3-phosphate + (9Z)-octadecenoyl-CoA = 1,2-di-(9Z-octadecenoyl)-sn-glycero-3-phosphate + CoA. It catalyses the reaction 1-(9Z-octadecenoyl)-sn-glycero-3-phosphate + hexadecanoyl-CoA = 1-(9Z)-octadecenoyl-2-hexadecanoyl-sn-glycero-3-phosphate + CoA. It carries out the reaction heptadecanoyl-CoA + 1-(9Z-octadecenoyl)-sn-glycero-3-phosphate = 1-(9Z)-octadecenoyl-2-heptadecanoyl-sn-glycero-3-phosphate + CoA. The enzyme catalyses 1-(9Z-octadecenoyl)-sn-glycero-3-phosphate + octadecanoyl-CoA = 1-(9Z-octadecenoyl)-2-octadecanoyl-sn-glycero-3-phosphate + CoA. The catalysed reaction is 1-(9Z-octadecenoyl)-sn-glycero-3-phosphate + (9Z,12Z)-octadecadienoyl-CoA = 1-(9Z)-octadecenoyl-2-(9Z,12Z)-octadecadienoyl-sn-glycero-3-phosphate + CoA. It catalyses the reaction 1-(9Z-octadecenoyl)-sn-glycero-3-phosphate + tetradecanoyl-CoA = 1-(9Z)-octadecenoyl-2-tetradecanoyl-sn-glycero-3-phosphate + CoA. It carries out the reaction pentadecanoyl-CoA + 1-(9Z-octadecenoyl)-sn-glycero-3-phosphate = 1-(9Z)-octadecenoyl-2-pentadecanoyl-sn-glycero-3-phosphate + CoA. The enzyme catalyses 1-hexadecanoyl-sn-glycero-3-phosphate + (9Z)-octadecenoyl-CoA = 1-hexadecanoyl-2-(9Z-octadecenoyl)-sn-glycero-3-phosphate + CoA. The catalysed reaction is 1-(9Z,12Z,15Z)-octadecatrienoyl-sn-glycero-3-phosphate + (9Z)-octadecenoyl-CoA = 1-(9Z,12Z,15Z)-octadecatrienoyl-2-(9Z)-octadecenoyl-sn-glycero-3-phosphate + CoA. It catalyses the reaction 1-(6Z,9Z,12Z-octadecatrienoyl)-sn-glycero-3-phosphate + (9Z)-octadecenoyl-CoA = (6Z,9Z,12Z)-octadecatrienoyl-2-(9Z)-octadecenoyl-sn-glycero-3-phosphate + CoA. It carries out the reaction 1-eicosanoyl-sn-glycero-3-phosphate + (9Z)-octadecenoyl-CoA = 1-eicosanoyl-2-(9Z)-octadecenoyl-sn-glycero-3-phosphate + CoA. The enzyme catalyses 1-tetradecanoyl-sn-glycerol 3-phosphate + (9Z)-octadecenoyl-CoA = 1-tetradecanoyl-2-(9Z)-octadecenoyl-sn-glycero-3-phosphate + CoA. The catalysed reaction is 1-(9Z-octadecenoyl)-sn-glycero-3-phosphate + (5Z,8Z,11Z,14Z)-eicosatetraenoyl-CoA = 1-(9Z)-octadecenoyl-2-(5Z,8Z,11Z,14Z)-eicosatetraenoyl-sn-glycero-3-phosphate + CoA. It catalyses the reaction 1-(9Z-octadecenoyl)-sn-glycero-3-phosphate + dodecanoyl-CoA = 1-(9Z)-octadecenoyl-2-dodecanoyl-sn-glycero-3-phosphate + CoA. It carries out the reaction (6Z)-octadecenoyl-CoA + 1-(9Z-octadecenoyl)-sn-glycero-3-phosphate = 1-(9Z)-octadecenoyl-2-(6Z)-octadecenoyl-sn-glycero-3-phosphate + CoA. The enzyme catalyses (11Z)-octadecenoyl-CoA + 1-(9Z-octadecenoyl)-sn-glycero-3-phosphate = 1-(9Z)-octadecenoyl-2-(11Z)-octadecenoyl-sn-glycero-3-phosphate + CoA. The catalysed reaction is (9Z)-hexadecenoyl-CoA + 1-(9Z-octadecenoyl)-sn-glycero-3-phosphate = 1-(9Z-octadecenoyl)-2-(9Z-hexadecenoyl)-sn-glycero-3-phosphate + CoA. Its pathway is phospholipid metabolism; CDP-diacylglycerol biosynthesis; CDP-diacylglycerol from sn-glycerol 3-phosphate: step 2/3. Its function is as follows. Converts 1-acyl-sn-glycerol-3-phosphate (lysophosphatidic acid or LPA) into 1,2-diacyl-sn-glycerol-3-phosphate (phosphatidic acid or PA) by incorporating an acyl moiety at the sn-2 position of the glycerol backbone. The chain is 1-acyl-sn-glycerol-3-phosphate acyltransferase alpha (AGPAT1) from Homo sapiens (Human).